The sequence spans 101 residues: Protein Tat (101 aa).

The tract at residues 1–24 (MEPVDPNLEPWKHPGSQPRTACTN) is interaction with human CREBBP. The segment at 1–48 (MEPVDPNLEPWKHPGSQPRTACTNCYCKKCCFHCQVCFITKGLGISYG) is transactivation. The Zn(2+) site is built by cysteine 22, cysteine 25, and cysteine 27. The segment at 22-37 (CTNCYCKKCCFHCQVC) is cysteine-rich. Lysine 28 carries the N6-acetyllysine; by host PCAF modification. Positions 30, 33, 34, and 37 each coordinate Zn(2+). Positions 38–48 (FITKGLGISYG) are core. Residues 48-101 (GRKKRRQRQRAPDSSQNHQDSLSKQPSSQPRGDPTGPKESKKEVERETETDPLD) form a disordered region. Positions 49-57 (RKKRRQRQR) match the Nuclear localization signal, RNA-binding (TAR), and protein transduction motif. Positions 49–86 (RKKRRQRQRAPDSSQNHQDSLSKQPSSQPRGDPTGPKE) are interaction with the host capping enzyme RNGTT. N6-acetyllysine; by host EP300 and GCN5L2 is present on residues lysine 50 and lysine 51. Asymmetric dimethylarginine; by host PRMT6 is present on residues arginine 52 and arginine 53. The span at 59 to 77 (PDSSQNHQDSLSKQPSSQP) shows a compositional bias: polar residues. Lysine 71 participates in a covalent cross-link: Glycyl lysine isopeptide (Lys-Gly) (interchain with G-Cter in ubiquitin). Positions 78–80 (RGD) match the Cell attachment site motif. Over residues 83 to 101 (GPKESKKEVERETETDPLD) the composition is skewed to basic and acidic residues.

It belongs to the lentiviruses Tat family. As to quaternary structure, interacts with host CCNT1. Associates with the P-TEFb complex composed at least of Tat, P-TEFb (CDK9 and CCNT1), TAR RNA, RNA Pol II. Recruits the HATs CREBBP, TAF1/TFIID, EP300, PCAF and GCN5L2. Interacts with host KAT5/Tip60; this interaction targets the latter to degradation. Interacts with the host deacetylase SIRT1. Interacts with host capping enzyme RNGTT; this interaction stimulates RNGTT. Binds to host KDR, and to the host integrins ITGAV/ITGB3 and ITGA5/ITGB1. Interacts with host KPNB1/importin beta-1 without previous binding to KPNA1/importin alpha-1. Interacts with EIF2AK2. Interacts with host nucleosome assembly protein NAP1L1; this interaction may be required for the transport of Tat within the nucleus, since the two proteins interact at the nuclear rim. Interacts with host C1QBP/SF2P32; this interaction involves lysine-acetylated Tat. Interacts with the host chemokine receptors CCR2, CCR3 and CXCR4. Interacts with host DPP4/CD26; this interaction may trigger an anti-proliferative effect. Interacts with host LDLR. Interacts with the host extracellular matrix metalloproteinase MMP1. Interacts with host PRMT6; this interaction mediates Tat's methylation. Interacts with, and is ubiquitinated by MDM2/Hdm2. Interacts with host PSMC3 and HTATIP2. Interacts with STAB1; this interaction may overcome SATB1-mediated repression of IL2 and IL2RA (interleukin) in T cells by binding to the same domain than HDAC1. Interacts (when acetylated) with human CDK13, thereby increasing HIV-1 mRNA splicing and promoting the production of the doubly spliced HIV-1 protein Nef. Interacts with host TBP; this interaction modulates the activity of transcriptional pre-initiation complex. Interacts with host RELA. Interacts with host PLSCR1; this interaction negatively regulates Tat transactivation activity by altering its subcellular distribution. Post-translationally, asymmetrical arginine methylation by host PRMT6 seems to diminish the transactivation capacity of Tat and affects the interaction with host CCNT1. Acetylation by EP300, CREBBP, GCN5L2/GCN5 and PCAF regulates the transactivation activity of Tat. EP300-mediated acetylation of Lys-50 promotes dissociation of Tat from the TAR RNA through the competitive binding to PCAF's bromodomain. In addition, the non-acetylated Tat's N-terminus can also interact with PCAF. PCAF-mediated acetylation of Lys-28 enhances Tat's binding to CCNT1. Lys-50 is deacetylated by SIRT1. In terms of processing, polyubiquitination by host MDM2 does not target Tat to degradation, but activates its transactivation function and fosters interaction with CCNT1 and TAR RNA. Post-translationally, phosphorylated by EIF2AK2 on serine and threonine residues adjacent to the basic region important for TAR RNA binding and function. Phosphorylation of Tat by EIF2AK2 is dependent on the prior activation of EIF2AK2 by dsRNA.

It is found in the host nucleus. The protein resides in the host nucleolus. It localises to the host cytoplasm. Its subcellular location is the secreted. Transcriptional activator that increases RNA Pol II processivity, thereby increasing the level of full-length viral transcripts. Recognizes a hairpin structure at the 5'-LTR of the nascent viral mRNAs referred to as the transactivation responsive RNA element (TAR) and recruits the cyclin T1-CDK9 complex (P-TEFb complex) that will in turn hyperphosphorylate the RNA polymerase II to allow efficient elongation. The CDK9 component of P-TEFb and other Tat-activated kinases hyperphosphorylate the C-terminus of RNA Pol II that becomes stabilized and much more processive. Other factors such as HTATSF1/Tat-SF1, SUPT5H/SPT5, and HTATIP2 are also important for Tat's function. Besides its effect on RNA Pol II processivity, Tat induces chromatin remodeling of proviral genes by recruiting the histone acetyltransferases (HATs) CREBBP, EP300 and PCAF to the chromatin. This also contributes to the increase in proviral transcription rate, especially when the provirus integrates in transcriptionally silent region of the host genome. To ensure maximal activation of the LTR, Tat mediates nuclear translocation of NF-kappa-B by interacting with host RELA. Through its interaction with host TBP, Tat may also modulate transcription initiation. Tat can reactivate a latently infected cell by penetrating in it and transactivating its LTR promoter. In the cytoplasm, Tat is thought to act as a translational activator of HIV-1 mRNAs. Its function is as follows. Extracellular circulating Tat can be endocytosed by surrounding uninfected cells via the binding to several surface receptors such as CD26, CXCR4, heparan sulfate proteoglycans (HSPG) or LDLR. Neurons are rarely infected, but they internalize Tat via their LDLR. Through its interaction with nuclear HATs, Tat is potentially able to control the acetylation-dependent cellular gene expression. Modulates the expression of many cellular genes involved in cell survival, proliferation or in coding for cytokines or cytokine receptors. Tat plays a role in T-cell and neurons apoptosis. Tat induced neurotoxicity and apoptosis probably contribute to neuroAIDS. Circulating Tat also acts as a chemokine-like and/or growth factor-like molecule that binds to specific receptors on the surface of the cells, affecting many cellular pathways. In the vascular system, Tat binds to ITGAV/ITGB3 and ITGA5/ITGB1 integrins dimers at the surface of endothelial cells and competes with bFGF for heparin-binding sites, leading to an excess of soluble bFGF. In Human immunodeficiency virus type 1 group M subtype B (isolate SF33) (HIV-1), this protein is Protein Tat.